The primary structure comprises 436 residues: Acetyl-CoA decarbonylase/synthase complex subunit delta 1 (436 aa).

This sequence belongs to the CdhD family. As to quaternary structure, heterodimer of delta and gamma chains. The ACDS complex is made up of alpha, epsilon, beta, gamma and delta chains with a probable stoichiometry of (alpha(2)epsilon(2))(4)-beta(8)-(gamma(1)delta(1))(8) (Potential).

It participates in one-carbon metabolism; methanogenesis from acetate. Its function is as follows. Part of a complex that catalyzes the reversible cleavage of acetyl-CoA, allowing growth on acetate as sole source of carbon and energy. Probably maintains the overall quaternary structure of the ACDS complex. This Methanosarcina acetivorans (strain ATCC 35395 / DSM 2834 / JCM 12185 / C2A) protein is Acetyl-CoA decarbonylase/synthase complex subunit delta 1 (cdhD1).